Here is a 2647-residue protein sequence, read N- to C-terminus: Filamin-A (2647 aa).

The segment at 1–37 is disordered; sequence MSSSHSRCGQSAAVASPGGSIDSRDAEMPATEKDLAE. Ser-2 is modified (N-acetylserine). The actin-binding stretch occupies residues 2–274; sequence SSSHSRCGQS…PKAKLKPGAP (273 aa). A phosphoserine mark is found at Ser-11, Ser-16, and Ser-20. The segment covering 22 to 37 has biased composition (basic and acidic residues); the sequence is DSRDAEMPATEKDLAE. Residues Lys-42, Lys-43, and Lys-135 each participate in a glycyl lysine isopeptide (Lys-Gly) (interchain with G-Cter in ubiquitin) cross-link. 2 Calponin-homology (CH) domains span residues 43 to 149 and 166 to 269; these read KIQQ…LHYS and QTPK…KAKL. The disordered stretch occupies residues 271 to 294; it reads PGAPLRPKLNPKKARAYGPGIEPT. Filamin repeat units lie at residues 276–374, 376–474, 475–570, 571–663, 667–763, 764–866, 867–965, 966–1061, 1062–1154, 1155–1249, 1250–1349, 1350–1442, 1443–1539, 1540–1636, and 1641–1740; these read RPKL…EVYV, KSQG…TVTV, GQAC…EVKV, GTEC…MADI, PQDF…RVNV, GAGS…RVKV, EPSH…SVGV, SPSL…PLEA, VAPT…KAHV, APCF…KLQV, EPAV…QVPV, TEGC…KVPV, HDVT…KVKV, LPTH…RVRA, and DASK…QVTA. Residue Lys-299 forms a Glycyl lysine isopeptide (Lys-Gly) (interchain with G-Cter in SUMO1); alternate linkage. Residue Lys-299 forms a Glycyl lysine isopeptide (Lys-Gly) (interchain with G-Cter in SUMO2); alternate linkage. An N6-acetyllysine mark is found at Lys-376 and Lys-508. Lys-700, Lys-781, Lys-837, Lys-865, and Lys-906 each carry N6-acetyllysine. 2 positions are modified to phosphoserine: Ser-968 and Ser-1055. N6-acetyllysine; alternate is present on Lys-1071. Lys-1071 is modified (N6-succinyllysine; alternate). Ser-1084 is modified (phosphoserine). A Phosphothreonine modification is found at Thr-1089. Ser-1301 and Ser-1338 each carry phosphoserine. Lys-1372 carries the N6-acetyllysine modification. 2 positions are modified to phosphoserine: Ser-1459 and Ser-1533. The tract at residues 1490-1607 is interaction with furin; sequence PKGLVEPVDV…DNHDGTYTVA (118 aa). Lys-1538 carries the post-translational modification N6-acetyllysine. A phosphoserine mark is found at Ser-1630 and Ser-1734. The hinge 1 stretch occupies residues 1741-1778; it reads LAGDQPTVQTPLRSQQLAPQYNYPQGSQQTWIPERPMV. Position 1750 is a phosphothreonine (Thr-1750). 8 Filamin repeats span residues 1765–1860, 1861–1952, 1953–2039, 2042–2134, 2135–2230, 2233–2325, 2327–2420, and 2424–2516; these read QGSQ…QFYV, DYVN…TARV, TGDD…PVVI, SEIG…SVKV, TGEG…QFTV, LGEG…VVPV, SPSG…KIRV, and GHGG…KAKV. Residue Ser-1835 is modified to Phosphoserine. Ser-1967, Ser-2053, Ser-2128, Ser-2152, Ser-2158, Ser-2163, Ser-2180, Ser-2284, Ser-2327, and Ser-2329 each carry phosphoserine. Residue Thr-2336 is modified to Phosphothreonine. 6 positions are modified to phosphoserine: Ser-2338, Ser-2370, Ser-2414, Ser-2510, Ser-2523, and Ser-2526. The segment at 2517 to 2553 is hinge 2; the sequence is TGPRLVSNHSLHETSSVFVDSLTKVATVPQHATSGPG. Residues 2517 to 2647 are self-association site, tail; the sequence is TGPRLVSNHS…PGSPYRIMVP (131 aa). The Filamin 24 repeat unit spans residues 2552–2646; the sequence is PGPADVSKVV…IPGSPYRIMV (95 aa). Lys-2569 carries the post-translational modification N6-acetyllysine; alternate. Position 2569 is an N6-succinyllysine; alternate (Lys-2569). Lys-2575 is modified (N6-acetyllysine). Thr-2599 is subject to Phosphothreonine. An N6-acetyllysine mark is found at Lys-2607 and Lys-2621.

Belongs to the filamin family. In terms of assembly, homodimer. Interacts with FCGR1A, FLNB, FURIN, HSPB7, KCND2, INPPL1, MYOT, MYOZ1, PDLIM2, ARHGAP24, PSEN1, PSEN2 and ECSCR. Also interacts with various other binding partners in addition to filamentous actin. Interacts (via N-terminus) with TAF1B. Interacts (via N-terminus) with MIS18BP1 (via N-terminus). Interacts with TMEM67 (via C-terminus) and MKS1. Interacts (via actin-binding domain) with MICALL2 (via calponin-homology (CH) domain). Interacts with RFLNA and RFLNB. Interacts (via filamin repeat 5) with SYK; docks SYK to the plasma membrane. Interacts (via filamin repeats 19 and 21) with DRD3; increased PKA-mediated phosphorylation at Ser-2152. Interacts (via filamin repeat 21) with MAS1, AGTR1 and ADRA1D; increases PKA-mediated phosphorylation of FLNA at Ser-2152. Interacts (via filamin repeats 4, 9, 12, 17, 19, 21, and 23) with GP1BA (high affinity), ITGB7, ITGB2 and FBLIM1. Interacts with CEACAM1 (via cytoplasmic domain); inhibits cell migration and cell scattering by interfering with the interaction between FLNA and RALA. Interacts with FOXC1. Interacts (via calponin-homology (CH) domain 1 and filamin repeat 24) with CRMP1; the interaction alters FLNA ternary structure and thus promotes FLNA dissociation from F-actin. Interacts with DPYSL3/CRMP3 and DPYSL4/CRMP4. Phosphorylation at Ser-2152 is negatively regulated by the autoinhibited conformation of filamin repeats 19-21. Ligand binding induces a conformational switch triggering phosphorylation at Ser-2152 by PKA. Post-translationally, polyubiquitination in the CH1 domain by a SCF-like complex containing ASB2 leads to proteasomal degradation. Prior dissociation from actin may be required to expose the target lysines. Ubiquitinated in endothelial cells by RNF213 downstream of the non-canonical Wnt signaling pathway, leading to its degradation by the proteasome. As to expression, widely expressed. Highly expressed in Purkinje cells.

It localises to the cytoplasm. Its subcellular location is the cell cortex. It is found in the cytoskeleton. The protein resides in the perikaryon. The protein localises to the cell projection. It localises to the growth cone. Its subcellular location is the podosome. Functionally, actin binding protein that promotes orthogonal branching of actin filaments and links actin filaments to membrane glycoproteins. Anchors various transmembrane proteins to the actin cytoskeleton and serves as a scaffold for a wide range of cytoplasmic signaling proteins. Interaction with FLNB may allow neuroblast migration from the ventricular zone into the cortical plate. Tethers cell surface-localized furin, modulates its rate of internalization and directs its intracellular trafficking. Involved in ciliogenesis. Plays a role in cell-cell contacts and adherens junctions during the development of blood vessels, heart and brain organs. Plays a role in platelets morphology through interaction with SYK that regulates ITAM- and ITAM-like-containing receptor signaling, resulting in by platelet cytoskeleton organization maintenance. During the axon guidance process, required for growth cone collapse induced by SEMA3A-mediated stimulation of neurons. The protein is Filamin-A (Flna) of Mus musculus (Mouse).